A 314-amino-acid polypeptide reads, in one-letter code: Ribosomal RNA small subunit methyltransferase H (314 aa).

Residues 58-60, aspartate 76, phenylalanine 103, aspartate 119, and glutamine 126 each bind S-adenosyl-L-methionine; that span reads GGH.

It belongs to the methyltransferase superfamily. RsmH family.

The protein resides in the cytoplasm. It carries out the reaction cytidine(1402) in 16S rRNA + S-adenosyl-L-methionine = N(4)-methylcytidine(1402) in 16S rRNA + S-adenosyl-L-homocysteine + H(+). In terms of biological role, specifically methylates the N4 position of cytidine in position 1402 (C1402) of 16S rRNA. The protein is Ribosomal RNA small subunit methyltransferase H of Gloeobacter violaceus (strain ATCC 29082 / PCC 7421).